Here is a 253-residue protein sequence, read N- to C-terminus: Hydroxyacylglutathione hydrolase (253 aa).

Residues H54, H56, D58, H59, H112, D131, and H169 each contribute to the Zn(2+) site.

It belongs to the metallo-beta-lactamase superfamily. Glyoxalase II family. In terms of assembly, monomer. It depends on Zn(2+) as a cofactor.

It carries out the reaction an S-(2-hydroxyacyl)glutathione + H2O = a 2-hydroxy carboxylate + glutathione + H(+). The protein operates within secondary metabolite metabolism; methylglyoxal degradation; (R)-lactate from methylglyoxal: step 2/2. Its function is as follows. Thiolesterase that catalyzes the hydrolysis of S-D-lactoyl-glutathione to form glutathione and D-lactic acid. This chain is Hydroxyacylglutathione hydrolase, found in Bartonella tribocorum (strain CIP 105476 / IBS 506).